The primary structure comprises 77 residues: Acyl carrier protein (77 aa).

One can recognise a Carrier domain in the interval 2–77 (SDIADRVKKI…DAVKFIQGAV (76 aa)). S37 bears the O-(pantetheine 4'-phosphoryl)serine mark.

Belongs to the acyl carrier protein (ACP) family. Post-translationally, 4'-phosphopantetheine is transferred from CoA to a specific serine of apo-ACP by AcpS. This modification is essential for activity because fatty acids are bound in thioester linkage to the sulfhydryl of the prosthetic group.

It is found in the cytoplasm. It participates in lipid metabolism; fatty acid biosynthesis. Carrier of the growing fatty acid chain in fatty acid biosynthesis. The polypeptide is Acyl carrier protein (Paracoccus denitrificans (strain Pd 1222)).